The chain runs to 431 residues: Glucose-1-phosphate adenylyltransferase (431 aa).

Lys-39 contacts beta-D-fructose 1,6-bisphosphate. Positions 40, 46, and 52 each coordinate AMP. Tyr-114 is an alpha-D-glucose 1-phosphate binding site. Arg-130 contributes to the AMP binding site. Residues Gly-179, 194-195 (EK), and Ser-212 contribute to the alpha-D-glucose 1-phosphate site. Residue Arg-386 coordinates AMP. Beta-D-fructose 1,6-bisphosphate contacts are provided by residues 419 to 423 (REMLR) and 429 to 431 (QER).

This sequence belongs to the bacterial/plant glucose-1-phosphate adenylyltransferase family. In terms of assembly, homotetramer.

The catalysed reaction is alpha-D-glucose 1-phosphate + ATP + H(+) = ADP-alpha-D-glucose + diphosphate. It functions in the pathway glycan biosynthesis; glycogen biosynthesis. Allosterically activated by fructose-1,6-bisphosphate (F16BP) and inhibited by AMP. Functionally, involved in the biosynthesis of ADP-glucose, a building block required for the elongation reactions to produce glycogen. Catalyzes the reaction between ATP and alpha-D-glucose 1-phosphate (G1P) to produce pyrophosphate and ADP-Glc. This chain is Glucose-1-phosphate adenylyltransferase, found in Enterobacter sp. (strain 638).